Here is a 195-residue protein sequence, read N- to C-terminus: NADH-quinone oxidoreductase subunit B (195 aa).

Residues Cys-74, Cys-75, Cys-139, and Cys-169 each contribute to the [4Fe-4S] cluster site.

Belongs to the complex I 20 kDa subunit family. As to quaternary structure, NDH-1 is composed of 14 different subunits. Subunits NuoB, C, D, E, F, and G constitute the peripheral sector of the complex. The cofactor is [4Fe-4S] cluster.

Its subcellular location is the cell inner membrane. It carries out the reaction a quinone + NADH + 5 H(+)(in) = a quinol + NAD(+) + 4 H(+)(out). In terms of biological role, NDH-1 shuttles electrons from NADH, via FMN and iron-sulfur (Fe-S) centers, to quinones in the respiratory chain. The immediate electron acceptor for the enzyme in this species is believed to be ubiquinone. Couples the redox reaction to proton translocation (for every two electrons transferred, four hydrogen ions are translocated across the cytoplasmic membrane), and thus conserves the redox energy in a proton gradient. The chain is NADH-quinone oxidoreductase subunit B from Methylorubrum populi (strain ATCC BAA-705 / NCIMB 13946 / BJ001) (Methylobacterium populi).